Consider the following 219-residue polypeptide: Transmembrane protein 179B (219 aa).

Transmembrane regions (helical) follow at residues 6–26, 69–89, 105–125, and 167–187; these read PLLLELLLYGSCFICGIITAA, ISVCVAVFCFSLTLYWIYIAF, LGLSGVFLFFLLVTGCILKIG, and AETAVWVNFFFWMIIVVLVLI. The segment at 195 to 219 is disordered; that stretch reads IRPGTEDPSAPPSETEPFFNRPGRP.

The protein belongs to the TMEM179 family.

It is found in the membrane. The polypeptide is Transmembrane protein 179B (tmem179b) (Danio rerio (Zebrafish)).